The following is a 327-amino-acid chain: GTPase Obg (327 aa).

Positions 1 to 159 (MQFIDQANII…WEVQLELKLL (159 aa)) constitute an Obg domain. One can recognise an OBG-type G domain in the interval 160 to 327 (AEVGIIGLPN…SLLSEVWKRI (168 aa)). Residues 166–173 (GLPNAGKS), 191–195 (FTTLI), 213–216 (DIPG), 280–283 (NKME), and 309–311 (SSS) contribute to the ATP site. 2 residues coordinate Mg(2+): S173 and T193.

It belongs to the TRAFAC class OBG-HflX-like GTPase superfamily. OBG GTPase family. In terms of assembly, monomer. Mg(2+) serves as cofactor.

It is found in the cytoplasm. Its function is as follows. An essential GTPase which binds GTP, GDP and possibly (p)ppGpp with moderate affinity, with high nucleotide exchange rates and a fairly low GTP hydrolysis rate. Plays a role in control of the cell cycle, stress response, ribosome biogenesis and in those bacteria that undergo differentiation, in morphogenesis control. This is GTPase Obg from Prochlorococcus marinus (strain MIT 9301).